Reading from the N-terminus, the 822-residue chain is AP-1 complex subunit gamma-1 (822 aa).

The disordered stretch occupies residues 597–628; that stretch reads EIVQTNGETEPAPLETKPPPSGPQPTSQANDL. Residues 702 to 817 enclose the GAE domain; that stretch reads AGIPSITAYS…QDLAEVNNFP (116 aa).

Belongs to the adaptor complexes large subunit family. Adaptor protein complex 1 (AP-1) is a heterotetramer composed of two large adaptins (gamma-type subunit AP1G1 and beta-type subunit AP1B1), a medium adaptin (mu-type subunit AP1M1 or AP1M2) and a small adaptin (sigma-type subunit AP1S1 or AP1S2 or AP1S3). Interacts (via GAE domain) with RABEP1. Interacts with SYNRG/gamma-synergin. Interacts with EPS15. Interacts (via GAE domain) with AP1AR (via coiled-coil domain). Interacts with CLN3 (via dileucine motif); this interaction facilitates lysosomal targeting. Interacts (via GAE domain) with AFTPH/aftiphilin; the interaction is required to recruit AFTPH/aftiphilin to the perinuclear region of the cell. As to expression, widely expressed.

It localises to the golgi apparatus. Its subcellular location is the cytoplasmic vesicle. It is found in the clathrin-coated vesicle membrane. The protein localises to the cytoplasm. The protein resides in the perinuclear region. It localises to the clathrin-coated vesicle. Its subcellular location is the membrane. It is found in the clathrin-coated pit. Its function is as follows. Subunit of clathrin-associated adaptor protein complex 1 that plays a role in protein sorting in the late-Golgi/trans-Golgi network (TGN) and/or endosomes. The AP complexes mediate both the recruitment of clathrin to membranes and the recognition of sorting signals within the cytosolic tails of transmembrane cargo molecules. In association with AFTPH/aftiphilin in the aftiphilin/p200/gamma-synergin complex, involved in the trafficking of transferrin from early to recycling endosomes, and the membrane trafficking of furin and the lysosomal enzyme cathepsin D between the trans-Golgi network (TGN) and endosomes. The polypeptide is AP-1 complex subunit gamma-1 (AP1G1) (Homo sapiens (Human)).